A 275-amino-acid polypeptide reads, in one-letter code: 4-hydroxy-3-methylbut-2-enyl diphosphate reductase (275 aa).

Residue cysteine 12 coordinates [4Fe-4S] cluster. Histidine 40 and histidine 70 together coordinate (2E)-4-hydroxy-3-methylbut-2-enyl diphosphate. Residues histidine 40 and histidine 70 each contribute to the dimethylallyl diphosphate site. 2 residues coordinate isopentenyl diphosphate: histidine 40 and histidine 70. [4Fe-4S] cluster is bound at residue cysteine 92. Histidine 119 is a (2E)-4-hydroxy-3-methylbut-2-enyl diphosphate binding site. Residue histidine 119 participates in dimethylallyl diphosphate binding. Histidine 119 contributes to the isopentenyl diphosphate binding site. Glutamate 121 serves as the catalytic Proton donor. Threonine 151 contributes to the (2E)-4-hydroxy-3-methylbut-2-enyl diphosphate binding site. Cysteine 181 provides a ligand contact to [4Fe-4S] cluster. 4 residues coordinate (2E)-4-hydroxy-3-methylbut-2-enyl diphosphate: serine 209, serine 210, asparagine 211, and serine 251. Residues serine 209, serine 210, asparagine 211, and serine 251 each coordinate dimethylallyl diphosphate. Isopentenyl diphosphate is bound by residues serine 209, serine 210, asparagine 211, and serine 251.

This sequence belongs to the IspH family. The cofactor is [4Fe-4S] cluster.

The enzyme catalyses isopentenyl diphosphate + 2 oxidized [2Fe-2S]-[ferredoxin] + H2O = (2E)-4-hydroxy-3-methylbut-2-enyl diphosphate + 2 reduced [2Fe-2S]-[ferredoxin] + 2 H(+). It catalyses the reaction dimethylallyl diphosphate + 2 oxidized [2Fe-2S]-[ferredoxin] + H2O = (2E)-4-hydroxy-3-methylbut-2-enyl diphosphate + 2 reduced [2Fe-2S]-[ferredoxin] + 2 H(+). The protein operates within isoprenoid biosynthesis; dimethylallyl diphosphate biosynthesis; dimethylallyl diphosphate from (2E)-4-hydroxy-3-methylbutenyl diphosphate: step 1/1. Its pathway is isoprenoid biosynthesis; isopentenyl diphosphate biosynthesis via DXP pathway; isopentenyl diphosphate from 1-deoxy-D-xylulose 5-phosphate: step 6/6. Catalyzes the conversion of 1-hydroxy-2-methyl-2-(E)-butenyl 4-diphosphate (HMBPP) into a mixture of isopentenyl diphosphate (IPP) and dimethylallyl diphosphate (DMAPP). Acts in the terminal step of the DOXP/MEP pathway for isoprenoid precursor biosynthesis. The sequence is that of 4-hydroxy-3-methylbut-2-enyl diphosphate reductase from Thermotoga sp. (strain RQ2).